A 470-amino-acid chain; its full sequence is Glycine--tRNA ligase (470 aa).

Substrate is bound by residues Arg94 and Glu183. ATP contacts are provided by residues 215–217 (RNE), 225–230 (FRMVEF), 298–299 (EI), and 342–345 (GCDR). 230–234 (FEQME) lines the substrate pocket. Residue 338–342 (ETSSG) coordinates substrate.

Belongs to the class-II aminoacyl-tRNA synthetase family. As to quaternary structure, homodimer.

Its subcellular location is the cytoplasm. The catalysed reaction is tRNA(Gly) + glycine + ATP = glycyl-tRNA(Gly) + AMP + diphosphate. Catalyzes the attachment of glycine to tRNA(Gly). The protein is Glycine--tRNA ligase of Chlorobaculum tepidum (strain ATCC 49652 / DSM 12025 / NBRC 103806 / TLS) (Chlorobium tepidum).